The sequence spans 144 residues: Granulocyte-macrophage colony-stimulating factor (144 aa).

A signal peptide spans 1–17; that stretch reads MWLQGLLLLGTVACSIS. Ser24 carries O-linked (GalNAc...) serine glycosylation. An O-linked (GalNAc...) threonine glycan is attached at Thr27. 2 N-linked (GlcNAc...) asparagine glycosylation sites follow: Asn44 and Asn54. Disulfide bonds link Cys71–Cys113 and Cys105–Cys138.

The protein belongs to the GM-CSF family. In terms of assembly, monomer. The signaling GM-CSF receptor complex is a dodecamer of two head-to-head hexamers of two alpha, two beta, and two ligand subunits.

The protein resides in the secreted. Cytokine that stimulates the growth and differentiation of hematopoietic precursor cells from various lineages, including granulocytes, macrophages, eosinophils and erythrocytes. This chain is Granulocyte-macrophage colony-stimulating factor (CSF2), found in Chlorocebus aethiops (Green monkey).